We begin with the raw amino-acid sequence, 211 residues long: Thymidylate kinase (211 aa).

ATP is bound at residue 11-18 (GPDGAGKT).

This sequence belongs to the thymidylate kinase family.

The enzyme catalyses dTMP + ATP = dTDP + ADP. Functionally, phosphorylation of dTMP to form dTDP in both de novo and salvage pathways of dTTP synthesis. This chain is Thymidylate kinase, found in Streptococcus equi subsp. equi (strain 4047).